Reading from the N-terminus, the 432-residue chain is Serine/threonine-protein kinase Sgk1 (432 aa).

Positions 67 to 93 (PELMNANPSPPPSPSQQINLGPSSNPH) are disordered. The span at 82–92 (QQINLGPSSNP) shows a compositional bias: polar residues. One can recognise a Protein kinase domain in the interval 99–356 (FHFLKVIGKG…FTEIKNHIFF (258 aa)). ATP contacts are provided by residues 105–113 (IGKGSFGKV) and K128. D223 functions as the Proton acceptor in the catalytic mechanism. One can recognise an AGC-kinase C-terminal domain in the interval 357 to 432 (SPINWDDLIN…SYAPPVDSFL (76 aa)).

It belongs to the protein kinase superfamily. AGC Ser/Thr protein kinase family.

It localises to the cytoplasm. Its subcellular location is the nucleus. The protein localises to the endoplasmic reticulum. The catalysed reaction is L-seryl-[protein] + ATP = O-phospho-L-seryl-[protein] + ADP + H(+). It carries out the reaction L-threonyl-[protein] + ATP = O-phospho-L-threonyl-[protein] + ADP + H(+). Its function is as follows. Protein kinase that may play an important role in cellular stress response. May be involved in the regulation of processes such as cell survival, neuronal excitability and renal sodium excretion. The chain is Serine/threonine-protein kinase Sgk1 (SGK1) from Gallus gallus (Chicken).